We begin with the raw amino-acid sequence, 375 residues long: Erythronate-4-phosphate dehydrogenase (375 aa).

Residue Ser49 coordinates substrate. NAD(+)-binding residues include Asp150 and Thr178. Arg211 is an active-site residue. NAD(+) is bound at residue Asp231. Glu236 is a catalytic residue. The Proton donor role is filled by His253. Position 256 (Gly256) interacts with NAD(+).

This sequence belongs to the D-isomer specific 2-hydroxyacid dehydrogenase family. PdxB subfamily. Homodimer.

The protein localises to the cytoplasm. It catalyses the reaction 4-phospho-D-erythronate + NAD(+) = (R)-3-hydroxy-2-oxo-4-phosphooxybutanoate + NADH + H(+). It functions in the pathway cofactor biosynthesis; pyridoxine 5'-phosphate biosynthesis; pyridoxine 5'-phosphate from D-erythrose 4-phosphate: step 2/5. In terms of biological role, catalyzes the oxidation of erythronate-4-phosphate to 3-hydroxy-2-oxo-4-phosphonooxybutanoate. The sequence is that of Erythronate-4-phosphate dehydrogenase from Hydrogenovibrio crunogenus (strain DSM 25203 / XCL-2) (Thiomicrospira crunogena).